The primary structure comprises 293 residues: L-ornithine N(alpha)-acyltransferase (293 aa).

Belongs to the acetyltransferase family. OlsB subfamily.

The catalysed reaction is a (3R)-hydroxyacyl-[ACP] + L-ornithine = a lyso-ornithine lipid + holo-[ACP] + H(+). It participates in lipid metabolism. Functionally, catalyzes the first step in the biosynthesis of ornithine lipids, which are phosphorus-free membrane lipids. Catalyzes the 3-hydroxyacyl-acyl carrier protein-dependent acylation of ornithine to form lyso-ornithine lipid (LOL). This chain is L-ornithine N(alpha)-acyltransferase, found in Agrobacterium fabrum (strain C58 / ATCC 33970) (Agrobacterium tumefaciens (strain C58)).